We begin with the raw amino-acid sequence, 485 residues long: Probable RNA-binding protein 46 (485 aa).

RRM domains lie at cysteine 61–aspartate 139, cysteine 141–proline 223, and lysine 236–proline 308.

In terms of assembly, interacts with YTHDC2, MEIOC, MOV10, CNOT6L, DDX4, UPF1 and PABPC1.

It localises to the cytoplasm. Essential for male and female fertility, playing a crucial role in regulating germ cell development by ensuring the proper progression of meiosis prophase I. Regulates mitotic-to-meiotic transition in spermatogenesis by forming a complex with MEIOC and YTHDC2 which recognizes and down-regulates mitotic transcripts for a successful meiotic entry. Required for normal synaptonemal complex formation during meiosis, binding meiotic cohesin subunit mRNAs containing GCCUAU/GUUCGA motifs in their 3'UTRs regions and positively regulating their translation. Required for spermatogonial differentiation in both developing and adult testis. This is Probable RNA-binding protein 46 (RBM46) from Macaca fascicularis (Crab-eating macaque).